The chain runs to 1013 residues: MLFSGGQYSPVGRPEEVLLIYKIFLVIICFHAILVTSLKENAGNSSLLSPSAESSLVSLVPYSNGTPDAASEVLSTLNRTEKSKITILKTFNASGVKSQRNICNLSSICSDSVFFRGEIVFQHDDHYNVTQNQDIVNSTFAGVLSLSELKRTELNKTLQTLSETYFIVCATAEAQNTLNCTFTVKLNETMNVCAMMVTFKSVQIRPMEQCCCSPRTPCPSSPEELEKLQCDLQDPIVCLADQPHGPPVSSSSKPVPVVPQATIFSHVASDFSLAEPLDHALMTSSTPSLAQETRLPSPQPTISLTSSPAIDLPVQHVVASSSLPQTDLSHTLSPVQSSIPSPTTAAPSVPEKVVAISTPPGETVVNTSSVPDLEAQVSQMEKALSLGSLEPNLAGEMVNRVSKLLHSPLALLAPLAQRLLKVVDAIGLQLNFSSTTISLTSPSLALAVIRVNASNFNTTTFAAQDPANLQVSLEAQAPKNSIGAITLPSSLMSNLPASEVELASRVQFNFFETPALFQDPSLENLSLISYVISSSVTNMTIKNLTRNVTVALKHINPSQDDLTVKCVFWDLNRNGGRGGWSSDGCSVKEKRMNETICTCSHLTSFGILLDLSRTSLPPSQMMALTFITYIGCGLSSIFLSVTLVTYIAFEKIRRDYPSKILIQLCAALLLLNLVFLLDSWIALYNARGFCISVAVFLHYFLLVSFTWMGLEAFHMYLALVKVFNTYIRKYILKFCIVGWGIPAVVVSIVLTISPDNYGIGSYGKFPNGTPDDFCWINSSVVFYITVVGYFCVIFLLNVSMFIVVLVQLCRIKKKKQLGAQRKTSIQDLRSIAGLTFLLGITWGFAFFAWGPVNLTFMYLFAIFNTLQGFFIFIFYCAAKENVRKQWRRYLCCGKLRLAENSDWSKTATNGLKKQTVNQGVSSSSNSLQSSCNSTNSTTLLVNSDCSVHASGNGNASTERNGVSFSVQNGDVCLHDLTGKQHMFSDKEDSCNGKSRMALRRTSKRGSLHFIEQM.

Positions methionine 1 to serine 37 are cleaved as a signal peptide. Over leucine 38–alanine 623 the chain is Extracellular. N-linked (GlcNAc...) asparagine glycosylation is found at asparagine 44, asparagine 78, asparagine 92, asparagine 104, asparagine 128, asparagine 137, asparagine 155, asparagine 179, asparagine 187, asparagine 366, asparagine 431, asparagine 452, asparagine 457, asparagine 524, asparagine 538, asparagine 543, asparagine 547, and asparagine 593. One can recognise a GAIN-B domain in the interval asparagine 457 to serine 615. Intrachain disulfides connect cysteine 566/cysteine 597 and cysteine 585/cysteine 599. The tract at residues cysteine 566 to serine 615 is GPS. The stachel stretch occupies residues serine 604–serine 615. The helical transmembrane segment at leucine 624–valine 644 threads the bilayer. The Cytoplasmic portion of the chain corresponds to threonine 645–glutamine 663. Residues leucine 664–tyrosine 684 traverse the membrane as a helical segment. Over asparagine 685 to glycine 688 the chain is Extracellular. A helical membrane pass occupies residues phenylalanine 689 to glycine 709. A disulfide bridge connects residues cysteine 690 and cysteine 774. Residues leucine 710 to lysine 733 lie on the Cytoplasmic side of the membrane. Residues phenylalanine 734–proline 754 form a helical membrane-spanning segment. Residues aspartate 755–threonine 785 lie on the Extracellular side of the membrane. Asparagine 777 carries an N-linked (GlcNAc...) asparagine glycan. Residues valine 786 to valine 806 traverse the membrane as a helical segment. The Cytoplasmic segment spans residues glutamine 807–serine 830. The chain crosses the membrane as a helical span at residues isoleucine 831–proline 851. At valine 852–asparagine 853 the chain is on the extracellular side. Asparagine 853 is a glycosylation site (N-linked (GlcNAc...) asparagine). Residues leucine 854 to phenylalanine 874 traverse the membrane as a helical segment. A 3beta-hydroxyandrost-5-en-17-one-binding site is contributed by asparagine 864. The Cytoplasmic segment spans residues tyrosine 875–methionine 1013. Position 1006 is a phosphoserine (serine 1006).

It belongs to the G-protein coupled receptor 2 family. Adhesion G-protein coupled receptor (ADGR) subfamily. Heterodimer of 2 chains generated by proteolytic processing; the large extracellular N-terminal fragment and the membrane-bound C-terminal fragment predominantly remain associated and non-covalently linked. Interacts with CFTR. Post-translationally, proteolytically cleaved into 2 subunits, an extracellular subunit and a seven-transmembrane subunit. Highly glycosylated. As to expression, epididymis-specific expression (at protein level). Associated with apical membranes of efferent ductule and proximal epididymal duct epithelia.

The protein resides in the apical cell membrane. Its activity is regulated as follows. Forms a heterodimer of 2 chains generated by proteolytic processing that remain associated through non-covalent interactions mediated by the GAIN-B domain. In the inactivated receptor, the Stachel sequence (also named stalk) is embedded in the GAIN-B domain, where it adopts a beta-strand conformation. On activation, the Stachel moves into the 7 transmembrane region and adopts a twisted hook-shaped configuration that forms contacts within the receptor, leading to coupling of a G-alpha protein, which activates signaling. The cleaved GAIN-B and N-terminal domains can then dissociate from the rest of the receptor. Deoxycorticosterone (DOC) acts as an antagonist of ADGRG2. Its function is as follows. Adhesion G-protein coupled receptor (aGPCR) for steroid hormones, such as dehydroepiandrosterone (DHEA; also named 3beta-hydroxyandrost-5-en-17-one) and androstenedione. Involved in a signal transduction pathway controlling epididymal function and male fertility. Ligand binding causes a conformation change that triggers signaling via guanine nucleotide-binding proteins (G proteins) and modulates the activity of downstream effectors, such as adenylate cyclase. ADGRG2 is coupled to G(s) G proteins and mediates activation of adenylate cyclase activity. Also able to couple with G(q) G proteins in vitro. May regulate fluid exchange within epididymis. The chain is Adhesion G-protein coupled receptor G2 from Rattus norvegicus (Rat).